Here is a 205-residue protein sequence, read N- to C-terminus: Guanylate kinase (205 aa).

In terms of domain architecture, Guanylate kinase-like spans 3-183 (GFVLLISGPS…SYEALRAILI (181 aa)). 10–17 (GPSGAGKS) provides a ligand contact to ATP.

The protein belongs to the guanylate kinase family.

The protein resides in the cytoplasm. The catalysed reaction is GMP + ATP = GDP + ADP. Essential for recycling GMP and indirectly, cGMP. This Campylobacter jejuni (strain RM1221) protein is Guanylate kinase.